Here is an 83-residue protein sequence, read N- to C-terminus: Large ribosomal subunit protein bL31B (83 aa).

It belongs to the bacterial ribosomal protein bL31 family. Type B subfamily. Part of the 50S ribosomal subunit.

The polypeptide is Large ribosomal subunit protein bL31B (Lacticaseibacillus casei (strain BL23) (Lactobacillus casei)).